The chain runs to 462 residues: GTPase Der (462 aa).

EngA-type G domains are found at residues 9–171 (KTIA…GLTK) and 201–372 (IQVG…ECFS). Residues 15-22 (GQPNVGKS), 62-66 (DTGGM), 123-126 (NKID), 207-214 (GRVNVGKS), 254-258 (DTAGI), and 318-321 (NKWD) each bind GTP. A KH-like domain is found at 373 to 457 (KRIPTSLLNS…PLIINAKDKK (85 aa)).

The protein belongs to the TRAFAC class TrmE-Era-EngA-EngB-Septin-like GTPase superfamily. EngA (Der) GTPase family. As to quaternary structure, associates with the 50S ribosomal subunit.

In terms of biological role, GTPase that plays an essential role in the late steps of ribosome biogenesis. The chain is GTPase Der from Helicobacter acinonychis (strain Sheeba).